Consider the following 152-residue polypeptide: MTTLRLESLKANKGARRRKLRKGRGIAAGQGASCGFGMRGQKSRSGRPTRPGFEGGQMPLYRRVPKLKHFPLVNPKHFTVLNVSALNSLKDGSTVNLDSLVKDGVVTSPKHPLKILGNGDLTAKKLTVQAAAFTASARTKIEAAGGSCETLD.

Residues 31–58 (GASCGFGMRGQKSRSGRPTRPGFEGGQM) are disordered.

It belongs to the universal ribosomal protein uL15 family. As to quaternary structure, part of the 50S ribosomal subunit.

In terms of biological role, binds to the 23S rRNA. The polypeptide is Large ribosomal subunit protein uL15 (Parasynechococcus marenigrum (strain WH8102)).